We begin with the raw amino-acid sequence, 859 residues long: Villin-like protein (859 aa).

Gelsolin-like repeat units follow at residues L24 to E76, V148 to A188, L264 to K308, L401 to K450, T521 to E561, and L624 to E665. The HP domain occupies S793 to F859.

It belongs to the villin/gelsolin family.

Possible tumor suppressor. The polypeptide is Villin-like protein (Mus musculus (Mouse)).